A 389-amino-acid polypeptide reads, in one-letter code: Pyruvate dehydrogenase E1 component subunit alpha, somatic form, mitochondrial (389 aa).

The N-terminal 28 residues, 1–28 (GKMLAAVSRVLSGVAQKPASRVLVASRT), are a transit peptide targeting the mitochondrion. Residue Lys62 is modified to N6-acetyllysine; alternate. An N6-succinyllysine; alternate modification is found at Lys62. Pyruvate-binding residues include His91, Tyr117, Arg118, Ala156, Gly164, Val166, Asp195, Gly196, Ala197, Asn224, and Tyr226. Tyr117 and Arg118 together coordinate thiamine diphosphate. Residues Gly164, Val166, Asp195, Gly196, Ala197, and Asn224 each contribute to the thiamine diphosphate site. Asp195 provides a ligand contact to Mg(2+). Residues Asn224 and Tyr226 each contribute to the Mg(2+) site. At Ser231 the chain carries Phosphoserine; by PDK1. Lys243 carries the post-translational modification N6-acetyllysine; alternate. Position 243 is an N6-succinyllysine; alternate (Lys243). N6-succinyllysine is present on Lys276. Thiamine diphosphate is bound at residue His291. Ser292 carries the post-translational modification Phosphoserine; by PDK1, PDK2, PDK3 and PDK4. Ser294 carries the phosphoserine modification. The residue at position 299 (Ser299) is a Phosphoserine; by PDK1, PDK2, PDK3 and PDK4. Tyr300 bears the Phosphotyrosine mark. Lys312 is subject to N6-acetyllysine; alternate. N6-succinyllysine; alternate is present on Lys312. 2 positions are modified to N6-acetyllysine: Lys320 and Lys335. Position 384 is an N6-succinyllysine (Lys384).

Heterotetramer of two PDHA1 and two PDHB subunits. The heterotetramer interacts with DLAT, and is part of the multimeric pyruvate dehydrogenase complex that contains multiple copies of pyruvate dehydrogenase (E1), dihydrolipoamide acetyltransferase (DLAT, E2) and lipoamide dehydrogenase (DLD, E3). These subunits are bound to an inner core composed of about 48 DLAT and 12 PDHX molecules. Requires thiamine diphosphate as cofactor. Mg(2+) serves as cofactor. In terms of processing, phosphorylation at Ser-231, Ser-292 and Ser-299 by PDK family kinases inactivates the enzyme; for this phosphorylation at a single site is sufficient. Phosphorylation at Ser-292 interferes with access to active site, and thereby inactivates the enzyme. Dephosphorylation at all three sites, i.e. at Ser-231, Ser-292 and Ser-299, is required for reactivation. Acetylation alters the phosphorylation pattern. Deacetylated by SIRT3.

It localises to the mitochondrion matrix. It catalyses the reaction N(6)-[(R)-lipoyl]-L-lysyl-[protein] + pyruvate + H(+) = N(6)-[(R)-S(8)-acetyldihydrolipoyl]-L-lysyl-[protein] + CO2. With respect to regulation, pyruvate dehydrogenase activity is inhibited by phosphorylation of PDHA1; it is reactivated by dephosphorylation. Functionally, the pyruvate dehydrogenase complex catalyzes the overall conversion of pyruvate to acetyl-CoA and CO(2), and thereby links the glycolytic pathway to the tricarboxylic cycle. This is Pyruvate dehydrogenase E1 component subunit alpha, somatic form, mitochondrial (PDHA1) from Sus scrofa (Pig).